Consider the following 360-residue polypeptide: 3-dehydroquinate synthase (360 aa).

Residues 71–76, 105–109, 129–130, Lys-142, Lys-151, and 169–172 contribute to the NAD(+) site; these read DGEQYK, GVVGD, TT, and TLNT. Zn(2+) is bound by residues Glu-184, His-248, and His-265.

It belongs to the sugar phosphate cyclases superfamily. Dehydroquinate synthase family. The cofactor is Co(2+). Zn(2+) serves as cofactor. NAD(+) is required as a cofactor.

It is found in the cytoplasm. It carries out the reaction 7-phospho-2-dehydro-3-deoxy-D-arabino-heptonate = 3-dehydroquinate + phosphate. The protein operates within metabolic intermediate biosynthesis; chorismate biosynthesis; chorismate from D-erythrose 4-phosphate and phosphoenolpyruvate: step 2/7. Catalyzes the conversion of 3-deoxy-D-arabino-heptulosonate 7-phosphate (DAHP) to dehydroquinate (DHQ). This is 3-dehydroquinate synthase from Coxiella burnetii (strain CbuK_Q154) (Coxiella burnetii (strain Q154)).